A 362-amino-acid chain; its full sequence is D-alanine--D-alanine ligase (362 aa).

Positions 153-357 (KKIAREAGIP…YADLLTTLVS (205 aa)) constitute an ATP-grasp domain. Position 180-235 (180-235 (RELLGLPVFVKPARGGSSIGISKVDSWRDLPAAIEEAASHDPKVIIEAMITGPEVE)) interacts with ATP. Residues aspartate 312, glutamate 324, and asparagine 326 each contribute to the Mg(2+) site.

It belongs to the D-alanine--D-alanine ligase family. Requires Mg(2+) as cofactor. It depends on Mn(2+) as a cofactor.

Its subcellular location is the cytoplasm. It carries out the reaction 2 D-alanine + ATP = D-alanyl-D-alanine + ADP + phosphate + H(+). It functions in the pathway cell wall biogenesis; peptidoglycan biosynthesis. Functionally, cell wall formation. The chain is D-alanine--D-alanine ligase from Corynebacterium urealyticum (strain ATCC 43042 / DSM 7109).